Reading from the N-terminus, the 359-residue chain is NADH-quinone oxidoreductase subunit H (359 aa).

8 helical membrane-spanning segments follow: residues 16–36 (IWPATVWPVLWVLIKIVAVLA), 94–114 (GLFILGPIMTIMPALAAWAVI), 128–148 (GLLFIMAITSLEVYGVIIAGW), 167–187 (VSYEIAMGFCLVVVLMVSGSL), 205–225 (GLTFLSWNWLPLLPIFVVYFI), 261–281 (FFLAEYANMILVSVLCVLLFL), 296–316 (IPGWIWLGLKTFVVVTIFLWV), and 331–351 (LGWKIFIPVTLVWLVVVGAWM).

This sequence belongs to the complex I subunit 1 family. As to quaternary structure, NDH-1 is composed of 14 different subunits. Subunits NuoA, H, J, K, L, M, N constitute the membrane sector of the complex.

It is found in the cell inner membrane. The enzyme catalyses a quinone + NADH + 5 H(+)(in) = a quinol + NAD(+) + 4 H(+)(out). NDH-1 shuttles electrons from NADH, via FMN and iron-sulfur (Fe-S) centers, to quinones in the respiratory chain. The immediate electron acceptor for the enzyme in this species is believed to be ubiquinone. Couples the redox reaction to proton translocation (for every two electrons transferred, four hydrogen ions are translocated across the cytoplasmic membrane), and thus conserves the redox energy in a proton gradient. This subunit may bind ubiquinone. The sequence is that of NADH-quinone oxidoreductase subunit H from Polaromonas naphthalenivorans (strain CJ2).